Here is a 151-residue protein sequence, read N- to C-terminus: MKVAFLKDVPGRGKTGDVKEVNDGYARNYLIPNKLAMPASASVTSEIAAKQAAEDRRKAKAEAEMAQLAKELDGTNVSIKAKTGAKDKLYGQVTTTVIAAEIEKQTGKAIDKRKLELSEPIRQLGSYEVVIRFNKDLSSKINLIITAEENT.

Belongs to the bacterial ribosomal protein bL9 family.

Its function is as follows. Binds to the 23S rRNA. This chain is Large ribosomal subunit protein bL9, found in Dehalococcoides mccartyi (strain ATCC BAA-2266 / KCTC 15142 / 195) (Dehalococcoides ethenogenes (strain 195)).